A 445-amino-acid polypeptide reads, in one-letter code: Reticulon-4 receptor-like 1 (445 aa).

The signal sequence occupies residues 1-24; the sequence is MLRKGCCVELLLLLLAGELPLSGG. Positions 25–54 constitute an LRRNT domain; sequence CPRDCVCYPSPMTVSCQAHNFAAIPEGIPE. 8 LRR repeats span residues 55–76, 77–98, 101–123, 126–147, 150–171, 174–195, 198–219, and 222–243; these read DSER…HFSP, AMVT…TFEG, HLEE…TFQG, KLHA…IFGG, SLQY…IFVD, NLSH…IFRG, NLDR…AFHD, and RLTT…CLAP. One can recognise an LRRCT domain in the interval 255–306; that stretch reads NAWDCGCRARSLWEWLRRFRGSSSVVPCATPELRQGQDLKSLRVEDFRNCTG. 2 disordered regions span residues 304–380 and 401–421; these read CTGP…ELPE and RPKR…SGVQ. Basic residues-rich tracts occupy residues 352–366 and 401–413; these read GSKK…HRNR and RPKR…RRTP. The GPI-anchor amidated serine moiety is linked to residue Ser424. The helical transmembrane segment at 424-444 threads the bilayer; sequence SSGTALGVSLLAWILGLVVSL. A propeptide spans 425–445 (removed in mature form); sequence SGTALGVSLLAWILGLVVSLR.

Belongs to the Nogo receptor family. As to quaternary structure, identified in a complex that contains RTN4R, RTN4RL1 and NGFR; the interaction depends on the presence of chondroitin sulfate proteoglycans. Does not interact with MAG, OMG and RTN4. In terms of tissue distribution, detected in brain (at protein level). Expressed in various regions of the brain, including the cerebral cortex, hippocampus, striatum, thalamus and cerebellum.

It localises to the cell membrane. The protein resides in the membrane raft. The protein localises to the perikaryon. Its subcellular location is the cell projection. Cell surface receptor. Plays a functionally redundant role in postnatal brain development and in regulating axon regeneration in the adult central nervous system. Contributes to normal axon migration across the brain midline and normal formation of the corpus callosum. Protects motoneurons against apoptosis; protection against apoptosis is probably mediated by MAG. Plays a role in inhibiting neurite outgrowth and axon regeneration via its binding to neuronal chondroitin sulfate proteoglycans. Binds heparin. Like other family members, plays a role in restricting the number dendritic spines and the number of synapses that are formed during brain development. Signaling mediates activation of Rho and downstream reorganization of the actin cytoskeleton. The chain is Reticulon-4 receptor-like 1 from Rattus norvegicus (Rat).